The primary structure comprises 490 residues: MATETEVVAPVTVSNGGSKGCCKYGGPGYATPLAAMSGPSEKLIYVTAVYTGTGIDKPDYLATVDVDPSSPSYSSVIHRLPMPFVGDELHHSGWNSCSSCHGDASVDRRYLVLPSLISGRIYAIDTKENPRAPSLYKYVDPKEIADKTGLAFPHTAHCLATGEILVSCLGDEEGNAKGNGFLLLDSDFNIKNRWEKPGHSPLYGYDFWYQPRHKTMISTSWGAPKAFSKGFNLQHVADGLYGSHLHVYSWPGGEIKQLIDLGPTGLLPLEIRFLHDPSKDTGFVGSALSSNMIRFFKNSDETWSHEVVISVKPLKVENWILPEMPGLITDFLISLDDRFIYFVNWLHGDIRQYNIEDPKNPVLTGQIWVGGLLQKGSPVKAVGEDGNTFQFEVPQIKGKSLRGGPQMIQLSLDGKRLYATNSLFSAWDRQFYPEIMEKGSHIIQIDVDTEKGGLTINPDFFVDFGDEPDGPSLAHEMRYPGGDCTSDIWI.

Ala-2 is subject to N-acetylalanine. Residues Cys-21 and Cys-22 each coordinate selenite.

Belongs to the selenium-binding protein family. As to quaternary structure, interacts with GRXS14 and GRXS16. Interacts with DALL3. As to expression, expressed in seedlings, roots, leaves, stems and flowers.

In terms of biological role, binds cadmium and mediates lower sensitivity to stress requiring glutathione (GSH) for tolerance (e.g. cadmium, selenate, and hydrogen peroxide excess). Probably helps to detoxify cadmium potentially through direct binding. Binds selenium, cadmium, zinc and nickel in vitro. This is Selenium-binding protein 1 from Arabidopsis thaliana (Mouse-ear cress).